We begin with the raw amino-acid sequence, 743 residues long: 1,4-alpha-glucan branching enzyme GlgB (743 aa).

Catalysis depends on D423, which acts as the Nucleophile. E476 functions as the Proton donor in the catalytic mechanism.

The protein belongs to the glycosyl hydrolase 13 family. GlgB subfamily. As to quaternary structure, monomer.

It catalyses the reaction Transfers a segment of a (1-&gt;4)-alpha-D-glucan chain to a primary hydroxy group in a similar glucan chain.. The protein operates within glycan biosynthesis; glycogen biosynthesis. Catalyzes the formation of the alpha-1,6-glucosidic linkages in glycogen by scission of a 1,4-alpha-linked oligosaccharide from growing alpha-1,4-glucan chains and the subsequent attachment of the oligosaccharide to the alpha-1,6 position. The chain is 1,4-alpha-glucan branching enzyme GlgB from Pseudomonas fluorescens (strain Pf0-1).